Here is a 94-residue protein sequence, read N- to C-terminus: Integration host factor subunit beta (94 aa).

It belongs to the bacterial histone-like protein family. Heterodimer of an alpha and a beta chain.

Its function is as follows. This protein is one of the two subunits of integration host factor, a specific DNA-binding protein that functions in genetic recombination as well as in transcriptional and translational control. The chain is Integration host factor subunit beta from Pseudomonas paraeruginosa (strain DSM 24068 / PA7) (Pseudomonas aeruginosa (strain PA7)).